Consider the following 553-residue polypeptide: Hydroxylamine reductase (553 aa).

[2Fe-2S] cluster is bound by residues C3, C6, C18, and C25. Residues H252, E276, C320, C408, C436, C461, E495, and K497 each coordinate hybrid [4Fe-2O-2S] cluster. C408 is subject to Cysteine persulfide.

The protein belongs to the HCP family. [2Fe-2S] cluster serves as cofactor. The cofactor is hybrid [4Fe-2O-2S] cluster.

The protein resides in the cytoplasm. The catalysed reaction is A + NH4(+) + H2O = hydroxylamine + AH2 + H(+). Catalyzes the reduction of hydroxylamine to form NH(3) and H(2)O. This is Hydroxylamine reductase from Photobacterium phosphoreum.